A 154-amino-acid chain; its full sequence is Ribonuclease H (154 aa).

An RNase H type-1 domain is found at 1-142 (MTKQVEIFTD…CDELAREGAN (142 aa)). The Mg(2+) site is built by Asp10, Glu48, Asp70, and Asp134.

Belongs to the RNase H family. In terms of assembly, monomer. Mg(2+) serves as cofactor.

It localises to the cytoplasm. The enzyme catalyses Endonucleolytic cleavage to 5'-phosphomonoester.. Functionally, endonuclease that specifically degrades the RNA of RNA-DNA hybrids. The protein is Ribonuclease H of Yersinia enterocolitica serotype O:8 / biotype 1B (strain NCTC 13174 / 8081).